Reading from the N-terminus, the 430-residue chain is UDP-N-acetylglucosamine 1-carboxyvinyltransferase 1 (430 aa).

22–23 (KN) is a phosphoenolpyruvate binding site. Arg-102 contributes to the UDP-N-acetyl-alpha-D-glucosamine binding site. Residue Cys-126 is the Proton donor of the active site. The residue at position 126 (Cys-126) is a 2-(S-cysteinyl)pyruvic acid O-phosphothioketal. Residues 131 to 135 (RPVDL), 172 to 175 (KVSV), Asp-317, and Ile-339 contribute to the UDP-N-acetyl-alpha-D-glucosamine site.

The protein belongs to the EPSP synthase family. MurA subfamily.

It is found in the cytoplasm. It carries out the reaction phosphoenolpyruvate + UDP-N-acetyl-alpha-D-glucosamine = UDP-N-acetyl-3-O-(1-carboxyvinyl)-alpha-D-glucosamine + phosphate. Its pathway is cell wall biogenesis; peptidoglycan biosynthesis. In terms of biological role, cell wall formation. Adds enolpyruvyl to UDP-N-acetylglucosamine. This Mesorhizobium japonicum (strain LMG 29417 / CECT 9101 / MAFF 303099) (Mesorhizobium loti (strain MAFF 303099)) protein is UDP-N-acetylglucosamine 1-carboxyvinyltransferase 1.